Reading from the N-terminus, the 166-residue chain is Large ribosomal subunit protein uL10 (166 aa).

It belongs to the universal ribosomal protein uL10 family. In terms of assembly, part of the ribosomal stalk of the 50S ribosomal subunit. The N-terminus interacts with L11 and the large rRNA to form the base of the stalk. The C-terminus forms an elongated spine to which L12 dimers bind in a sequential fashion forming a multimeric L10(L12)X complex.

Its function is as follows. Forms part of the ribosomal stalk, playing a central role in the interaction of the ribosome with GTP-bound translation factors. This Staphylococcus epidermidis (strain ATCC 35984 / DSM 28319 / BCRC 17069 / CCUG 31568 / BM 3577 / RP62A) protein is Large ribosomal subunit protein uL10.